The sequence spans 465 residues: Ribulose bisphosphate carboxylase large chain (465 aa).

Lys-4 bears the N6,N6,N6-trimethyllysine mark. The substrate site is built by Asn-113 and Thr-163. Lys-165 functions as the Proton acceptor in the catalytic mechanism. Lys-167 lines the substrate pocket. Lys-191, Asp-193, and Glu-194 together coordinate Mg(2+). Lys-191 is modified (N6-carboxylysine). The active-site Proton acceptor is the His-284. 3 residues coordinate substrate: Arg-285, His-317, and Ser-369.

Belongs to the RuBisCO large chain family. Type I subfamily. As to quaternary structure, heterohexadecamer of 8 large chains and 8 small chains; disulfide-linked. The disulfide link is formed within the large subunit homodimers. The cofactor is Mg(2+). Post-translationally, the disulfide bond which can form in the large chain dimeric partners within the hexadecamer appears to be associated with oxidative stress and protein turnover.

The protein resides in the plastid. Its subcellular location is the chloroplast. The catalysed reaction is 2 (2R)-3-phosphoglycerate + 2 H(+) = D-ribulose 1,5-bisphosphate + CO2 + H2O. The enzyme catalyses D-ribulose 1,5-bisphosphate + O2 = 2-phosphoglycolate + (2R)-3-phosphoglycerate + 2 H(+). Functionally, ruBisCO catalyzes two reactions: the carboxylation of D-ribulose 1,5-bisphosphate, the primary event in carbon dioxide fixation, as well as the oxidative fragmentation of the pentose substrate in the photorespiration process. Both reactions occur simultaneously and in competition at the same active site. In Manilkara zapota (Sapodilla plum), this protein is Ribulose bisphosphate carboxylase large chain.